The following is a 554-amino-acid chain: Glucose-6-phosphate isomerase (554 aa).

Glutamate 358 functions as the Proton donor in the catalytic mechanism. Active-site residues include histidine 389 and lysine 515. Polar residues predominate over residues 527–540 (ANNSPAPQSDSSTD). The segment at 527–554 (ANNSPAPQSDSSTDALVRRYRSERGRTS) is disordered. Positions 542–554 (LVRRYRSERGRTS) are enriched in basic and acidic residues.

It belongs to the GPI family.

The protein localises to the cytoplasm. The catalysed reaction is alpha-D-glucose 6-phosphate = beta-D-fructose 6-phosphate. It participates in carbohydrate biosynthesis; gluconeogenesis. The protein operates within carbohydrate degradation; glycolysis; D-glyceraldehyde 3-phosphate and glycerone phosphate from D-glucose: step 2/4. Its function is as follows. Catalyzes the reversible isomerization of glucose-6-phosphate to fructose-6-phosphate. The protein is Glucose-6-phosphate isomerase of Mycolicibacterium paratuberculosis (strain ATCC BAA-968 / K-10) (Mycobacterium paratuberculosis).